The primary structure comprises 90 residues: Small ribosomal subunit protein uS17 (90 aa).

It belongs to the universal ribosomal protein uS17 family. Part of the 30S ribosomal subunit.

In terms of biological role, one of the primary rRNA binding proteins, it binds specifically to the 5'-end of 16S ribosomal RNA. This Burkholderia thailandensis (strain ATCC 700388 / DSM 13276 / CCUG 48851 / CIP 106301 / E264) protein is Small ribosomal subunit protein uS17.